The chain runs to 261 residues: Phosphatidylglycerol--prolipoprotein diacylglyceryl transferase (261 aa).

3 consecutive transmembrane segments (helical) span residues L20–A40, I54–V74, and I88–V108. R139 serves as a coordination point for a 1,2-diacyl-sn-glycero-3-phospho-(1'-sn-glycerol). Helical transmembrane passes span M175–F195 and A235–Y255.

This sequence belongs to the Lgt family.

Its subcellular location is the cell membrane. It catalyses the reaction L-cysteinyl-[prolipoprotein] + a 1,2-diacyl-sn-glycero-3-phospho-(1'-sn-glycerol) = an S-1,2-diacyl-sn-glyceryl-L-cysteinyl-[prolipoprotein] + sn-glycerol 1-phosphate + H(+). Its pathway is protein modification; lipoprotein biosynthesis (diacylglyceryl transfer). Catalyzes the transfer of the diacylglyceryl group from phosphatidylglycerol to the sulfhydryl group of the N-terminal cysteine of a prolipoprotein, the first step in the formation of mature lipoproteins. This chain is Phosphatidylglycerol--prolipoprotein diacylglyceryl transferase, found in Lactococcus lactis subsp. cremoris (strain MG1363).